We begin with the raw amino-acid sequence, 408 residues long: 1-deoxy-D-xylulose 5-phosphate reductoisomerase (408 aa).

NADPH-binding residues include Thr27, Gly28, Ser29, Ile30, Ala53, Arg54, Asn55, and Asn140. Lys141 lines the 1-deoxy-D-xylulose 5-phosphate pocket. Position 142 (Glu142) interacts with NADPH. Asp166 is a binding site for Mn(2+). 4 residues coordinate 1-deoxy-D-xylulose 5-phosphate: Ser167, Glu168, Ser192, and His215. Mn(2+) is bound at residue Glu168. Gly221 lines the NADPH pocket. 1-deoxy-D-xylulose 5-phosphate contacts are provided by Ser228, Asn233, Lys234, and Glu237. Glu237 serves as a coordination point for Mn(2+).

It belongs to the DXR family. Mg(2+) is required as a cofactor. It depends on Mn(2+) as a cofactor.

It catalyses the reaction 2-C-methyl-D-erythritol 4-phosphate + NADP(+) = 1-deoxy-D-xylulose 5-phosphate + NADPH + H(+). Its pathway is isoprenoid biosynthesis; isopentenyl diphosphate biosynthesis via DXP pathway; isopentenyl diphosphate from 1-deoxy-D-xylulose 5-phosphate: step 1/6. In terms of biological role, catalyzes the NADPH-dependent rearrangement and reduction of 1-deoxy-D-xylulose-5-phosphate (DXP) to 2-C-methyl-D-erythritol 4-phosphate (MEP). This is 1-deoxy-D-xylulose 5-phosphate reductoisomerase from Nitratidesulfovibrio vulgaris (strain DP4) (Desulfovibrio vulgaris).